A 737-amino-acid chain; its full sequence is Protein penguin (737 aa).

The segment at 1-128 is disordered; sequence MVSSEPKGPA…EKKDLKLKRK (128 aa). Basic and acidic residues-rich tracts occupy residues 76–89 and 107–122; these read KKFD…DKRL and EGEK…EKKD. The PUM-HD domain maps to 139–490; that stretch reads EANQIHEKLR…EILEQIEAPI (352 aa). 5 Pumilio repeats span residues 167-202, 203-238, 239-274, 388-425, and 426-462; these read NVGD…EISE, KLLP…KLVD, SLYG…YMRQ, NIKE…AIYD, and HLHG…EFIR. Residues 577–638 are disordered; it reads VESSSDDEDE…EEEPAAPLVS (62 aa). Positions 580–600 are enriched in acidic residues; the sequence is SSDDEDEDEDEDEESDDEGDE. Residues 601–615 show a composition bias toward basic and acidic residues; sequence KEQKEAAADDAEPKV. The segment covering 616 to 626 has biased composition (basic residues); it reads KKAKKEPKKPK.

The polypeptide is Protein penguin (Drosophila melanogaster (Fruit fly)).